Here is a 548-residue protein sequence, read N- to C-terminus: CTP synthase (548 aa).

The interval 1–266 is amidoligase domain; that stretch reads MRVNYIFVTG…DNYICKRFNL (266 aa). Serine 14 contributes to the CTP binding site. Residue serine 14 coordinates UTP. ATP contacts are provided by residues 15 to 20 and aspartate 72; that span reads SLGKGI. Mg(2+) is bound by residues aspartate 72 and glutamate 140. CTP is bound by residues 147-149, 187-192, and lysine 223; these read DIE and KTKPTQ. UTP-binding positions include 187 to 192 and lysine 223; that span reads KTKPTQ. The Glutamine amidotransferase type-1 domain maps to 291-543; sequence TVGMVGKYIE…IKAAIEYQHR (253 aa). L-glutamine is bound at residue glycine 353. The active-site Nucleophile; for glutamine hydrolysis is the cysteine 380. Residues 381-384, glutamate 404, and arginine 471 each bind L-glutamine; that span reads LGMQ. Active-site residues include histidine 516 and glutamate 518.

This sequence belongs to the CTP synthase family. As to quaternary structure, homotetramer.

The enzyme catalyses UTP + L-glutamine + ATP + H2O = CTP + L-glutamate + ADP + phosphate + 2 H(+). It carries out the reaction L-glutamine + H2O = L-glutamate + NH4(+). It catalyses the reaction UTP + NH4(+) + ATP = CTP + ADP + phosphate + 2 H(+). Its pathway is pyrimidine metabolism; CTP biosynthesis via de novo pathway; CTP from UDP: step 2/2. With respect to regulation, allosterically activated by GTP, when glutamine is the substrate; GTP has no effect on the reaction when ammonia is the substrate. The allosteric effector GTP functions by stabilizing the protein conformation that binds the tetrahedral intermediate(s) formed during glutamine hydrolysis. Inhibited by the product CTP, via allosteric rather than competitive inhibition. Its function is as follows. Catalyzes the ATP-dependent amination of UTP to CTP with either L-glutamine or ammonia as the source of nitrogen. Regulates intracellular CTP levels through interactions with the four ribonucleotide triphosphates. In Blochmanniella pennsylvanica (strain BPEN), this protein is CTP synthase.